Reading from the N-terminus, the 360-residue chain is Peptide chain release factor 1 (360 aa).

An N5-methylglutamine modification is found at Gln235.

This sequence belongs to the prokaryotic/mitochondrial release factor family. Post-translationally, methylated by PrmC. Methylation increases the termination efficiency of RF1.

It localises to the cytoplasm. Peptide chain release factor 1 directs the termination of translation in response to the peptide chain termination codons UAG and UAA. This chain is Peptide chain release factor 1, found in Bordetella parapertussis (strain 12822 / ATCC BAA-587 / NCTC 13253).